The following is a 345-amino-acid chain: Phosphoribosylformylglycinamidine cyclo-ligase (345 aa).

This sequence belongs to the AIR synthase family.

It is found in the cytoplasm. The enzyme catalyses 2-formamido-N(1)-(5-O-phospho-beta-D-ribosyl)acetamidine + ATP = 5-amino-1-(5-phospho-beta-D-ribosyl)imidazole + ADP + phosphate + H(+). Its pathway is purine metabolism; IMP biosynthesis via de novo pathway; 5-amino-1-(5-phospho-D-ribosyl)imidazole from N(2)-formyl-N(1)-(5-phospho-D-ribosyl)glycinamide: step 2/2. The sequence is that of Phosphoribosylformylglycinamidine cyclo-ligase from Pseudoalteromonas atlantica (strain T6c / ATCC BAA-1087).